We begin with the raw amino-acid sequence, 596 residues long: mRNA export factor mex67 (596 aa).

Phosphoserine occurs at positions 128, 130, and 133. LRR repeat units follow at residues 215–236 (DVISVSLSDNNLQSVTAVTTLA), 241–262 (KLLNLSLANNRITSLSDLDPWS), and 263–282 (PKTKLPELQELVLVGNPIVT). An LRRCT domain is found at 283-338 (TFANRAMDYQREMVSRFPKLRLLDGNSINSEIIASQSTVPFPVYQSFFDKVETEQI). Positions 338–499 (IVNSFLAAFF…ILIINDLLVI (162 aa)) constitute an NTF2 domain. Residues 543–596 (DTRQQIVLKIKAETGLNDYYAHMCCEQNNWDYNSALASFLELKSRNVIPAEAFS) form the TAP-C domain.

The protein belongs to the NXF family. Interacts with mlo3 and rae1.

It is found in the nucleus. The protein localises to the cytoplasm. Its function is as follows. Involved in the export of mRNA from the nucleus to the cytoplasm. The polypeptide is mRNA export factor mex67 (mex67) (Schizosaccharomyces pombe (strain 972 / ATCC 24843) (Fission yeast)).